We begin with the raw amino-acid sequence, 447 residues long: Imidazolonepropionase (447 aa).

Residues histidine 85 and histidine 87 each coordinate Fe(3+). Zn(2+)-binding residues include histidine 85 and histidine 87. Arginine 94, tyrosine 157, and histidine 190 together coordinate 4-imidazolone-5-propanoate. Tyrosine 157 lines the N-formimidoyl-L-glutamate pocket. Histidine 255 contacts Fe(3+). A Zn(2+)-binding site is contributed by histidine 255. Glutamate 258 provides a ligand contact to 4-imidazolone-5-propanoate. Position 329 (aspartate 329) interacts with Fe(3+). Aspartate 329 lines the Zn(2+) pocket. The N-formimidoyl-L-glutamate site is built by asparagine 331 and glycine 333. Residue serine 334 participates in 4-imidazolone-5-propanoate binding.

The protein belongs to the metallo-dependent hydrolases superfamily. HutI family. It depends on Zn(2+) as a cofactor. Requires Fe(3+) as cofactor.

Its subcellular location is the cytoplasm. The catalysed reaction is 4-imidazolone-5-propanoate + H2O = N-formimidoyl-L-glutamate. It functions in the pathway amino-acid degradation; L-histidine degradation into L-glutamate; N-formimidoyl-L-glutamate from L-histidine: step 3/3. Catalyzes the hydrolytic cleavage of the carbon-nitrogen bond in imidazolone-5-propanoate to yield N-formimidoyl-L-glutamate. It is the third step in the universal histidine degradation pathway. This chain is Imidazolonepropionase, found in Shouchella clausii (strain KSM-K16) (Alkalihalobacillus clausii).